Reading from the N-terminus, the 276-residue chain is Chlorophyll a-b binding protein CP29.3, chloroplastic (276 aa).

The transit peptide at 1 to 29 (MATTTAAAASGIFGIRIQDPRPGTGRVQA) directs the protein to the chloroplast. The disordered stretch occupies residues 1–53 (MATTTAAAASGIFGIRIQDPRPGTGRVQARFGFSFGKKKPAPPPKKSRQVQDD). Residues 36–48 (GKKKPAPPPKKSR) are compositionally biased toward basic residues. Residue tryptophan 59 coordinates chlorophyll b. Positions 79, 141, and 144 each coordinate chlorophyll a. A helical membrane pass occupies residues 147-167 (WAMLGTLGAIAVEALTGIAWQ). A chlorophyll a-binding site is contributed by leucine 181. The helical transmembrane segment at 185 to 205 (LPFSLTTLIWIEVLVVGYIEF) threads the bilayer. Chlorophyll b contacts are provided by glutamate 204 and arginine 207. Residues glutamate 242, histidine 245, arginine 247, and glutamine 259 each coordinate chlorophyll a. The chain crosses the membrane as a helical span at residues 248-268 (LAMVAFLIFALQAAFTGKGPV).

The protein belongs to the light-harvesting chlorophyll a/b-binding (LHC) protein family. As to quaternary structure, the LHC complex consists of chlorophyll a-b binding proteins. Binds at least 14 chlorophylls (8 Chl-a and 6 Chl-b) and carotenoids such as lutein and neoxanthin. is required as a cofactor. In terms of processing, photoregulated by reversible phosphorylation of its threonine residues.

It localises to the plastid. The protein localises to the chloroplast thylakoid membrane. The light-harvesting complex (LHC) functions as a light receptor, it captures and delivers excitation energy to photosystems with which it is closely associated. The chain is Chlorophyll a-b binding protein CP29.3, chloroplastic (LHCB4.3) from Arabidopsis thaliana (Mouse-ear cress).